We begin with the raw amino-acid sequence, 368 residues long: Germination protease (368 aa).

A propeptide spanning residues 1 to 16 (MEKKKLDLSQYAVRTD) is cleaved from the precursor.

It belongs to the peptidase A25 family. Homotetramer. Post-translationally, autoproteolytically processed. The inactive tetrameric zymogen termed p46 autoprocesses to a smaller form termed p41, which is active only during spore germination.

The enzyme catalyses Endopeptidase action with P4 Glu or Asp, P1 preferably Glu &gt; Asp, P1' hydrophobic and P2' Ala.. Initiates the rapid degradation of small, acid-soluble proteins during spore germination. The chain is Germination protease from Bacillus licheniformis (strain ATCC 14580 / DSM 13 / JCM 2505 / CCUG 7422 / NBRC 12200 / NCIMB 9375 / NCTC 10341 / NRRL NRS-1264 / Gibson 46).